The following is a 59-amino-acid chain: Large ribosomal subunit protein uL30 (59 aa).

This sequence belongs to the universal ribosomal protein uL30 family. As to quaternary structure, part of the 50S ribosomal subunit.

The sequence is that of Large ribosomal subunit protein uL30 from Acetivibrio thermocellus (strain ATCC 27405 / DSM 1237 / JCM 9322 / NBRC 103400 / NCIMB 10682 / NRRL B-4536 / VPI 7372) (Clostridium thermocellum).